We begin with the raw amino-acid sequence, 422 residues long: Steroid hormone receptor ERR1 (422 aa).

A disordered region spans residues 1 to 66 (MSSQVVGIEP…EGAGSGEQGS (66 aa)). The tract at residues 1–76 (MSSQVVGIEP…GKLVLSSLPK (76 aa)) is repressor domain. Lys14 is covalently cross-linked (Glycyl lysine isopeptide (Lys-Gly) (interchain with G-Cter in SUMO)). A phosphoserine mark is found at Ser19 and Ser22. The segment at residues 76–151 (KRLCLVCGDV…VGMLKEGVRL (76 aa)) is a DNA-binding region (nuclear receptor). 2 consecutive NR C4-type zinc fingers follow at residues 79 to 99 (CLVC…CEAC) and 115 to 134 (CPAS…CQAC). Residues Lys129, Lys138, Lys160, and Lys162 each carry the N6-acetyllysine; by PCAF/KAT2B modification. Residue Lys189 forms a Glycyl lysine isopeptide (Lys-Gly) (interchain with G-Cter in SUMO2) linkage. The region spanning 192 to 420 (PVNALVSHLL…KLFLEMLEAM (229 aa)) is the NR LBD domain. Lys402 is covalently cross-linked (Glycyl lysine isopeptide (Lys-Gly) (interchain with G-Cter in SUMO); alternate). Lys402 is covalently cross-linked (Glycyl lysine isopeptide (Lys-Gly) (interchain with G-Cter in SUMO2); alternate). An AF-2 domain region spans residues 402-422 (KLEGKVPMHKLFLEMLEAMMD).

The protein belongs to the nuclear hormone receptor family. NR3 subfamily. Binds DNA as a monomer or a homodimer. Interacts (via the AF2 domain) with coactivator PPARGC1A (via the L3 motif); the interaction greatly enhances transcriptional activity of genes involved in energy metabolism. Interacts with PIAS4; the interaction enhances sumoylation. Interacts with MAPK15; promotes re-localization of ESRRA to the cytoplasm through a XPO1-dependent mechanism then inhibits ESRRA transcriptional activity. In terms of processing, phosphorylation on Ser-19 enhances sumoylation on Lys-14 increasing repression of transcriptional activity. Sumoylated with SUMO2. Main site is Lys-14 which is enhanced by phosphorylation on Ser-19, cofactor activation, and by interaction with PIAS4. Sumoylation enhances repression of transcriptional activity, but has no effect on subcellular location nor on DNA binding. Post-translationally, reversibly acetylated. Acetylation by PCAF/KAT2 at Lys-129, Lys-138, Lys-160 and Lys-162 and PCAF/KAT2 decreases transcriptional activity probably by inhibiting DNA-binding activity; deacetylation involves SIRT1 and HDAC8 and increases DNA-binding. In terms of tissue distribution, most highly expressed in kidney, heart, and brown adipocytes. Also found in uterus, cervix and vagina.

It localises to the nucleus. Its subcellular location is the cytoplasm. Functionally, binds to an ERR-alpha response element (ERRE) containing a single consensus half-site, 5'-TNAAGGTCA-3'. Can bind to the medium-chain acyl coenzyme A dehydrogenase (MCAD) response element NRRE-1 and may act as an important regulator of MCAD promoter. Binds to the C1 region of the lactoferrin gene promoter. Requires dimerization and the coactivator, PGC-1A, for full activity. The ERRalpha/PGC1alpha complex is a regulator of energy metabolism. Induces the expression of PERM1 in the skeletal muscle. This Mus musculus (Mouse) protein is Steroid hormone receptor ERR1 (Esrra).